The chain runs to 299 residues: Pyridoxal kinase PdxY (299 aa).

Position 18 (S18) interacts with substrate. The ATP site is built by D120 and E157. D235 provides a ligand contact to substrate.

The protein belongs to the pyridoxine kinase family. PdxY subfamily. As to quaternary structure, homodimer. Mg(2+) serves as cofactor.

The catalysed reaction is pyridoxal + ATP = pyridoxal 5'-phosphate + ADP + H(+). It functions in the pathway cofactor metabolism; pyridoxal 5'-phosphate salvage; pyridoxal 5'-phosphate from pyridoxal: step 1/1. Its function is as follows. Pyridoxal kinase involved in the salvage pathway of pyridoxal 5'-phosphate (PLP). Catalyzes the phosphorylation of pyridoxal to PLP. In Deinococcus geothermalis (strain DSM 11300 / CIP 105573 / AG-3a), this protein is Pyridoxal kinase PdxY.